A 319-amino-acid polypeptide reads, in one-letter code: Cytochrome f (319 aa).

Positions 1–35 are cleaved as a signal peptide; sequence MQNRNISYWIKKCVIQSISIVILMKIIAWPSISEA. Tyr-36, Cys-56, Cys-59, and His-60 together coordinate heme. Residues 285 to 305 form a helical membrane-spanning segment; the sequence is VQSLLVFFVSVTLAQIFLVLK.

This sequence belongs to the cytochrome f family. In terms of assembly, the 4 large subunits of the cytochrome b6-f complex are cytochrome b6, subunit IV (17 kDa polypeptide, petD), cytochrome f and the Rieske protein, while the 4 small subunits are PetG, PetL, PetM and PetN. The complex functions as a dimer. Heme is required as a cofactor.

The protein resides in the plastid. It is found in the chloroplast thylakoid membrane. Its function is as follows. Component of the cytochrome b6-f complex, which mediates electron transfer between photosystem II (PSII) and photosystem I (PSI), cyclic electron flow around PSI, and state transitions. The sequence is that of Cytochrome f from Physcomitrium patens (Spreading-leaved earth moss).